The following is a 231-amino-acid chain: PIAGSMVLAAILLKLGGYGIIRMMQIFPTTKTDLFLPFIVLALWGAILANLTCLQQTDLKSLIAYSSISHMGLVVAAIIIQTPWGLSGAMALMIAHGFTSSALFCLANMTYERTHTRILILTRGLHNTLPMATTWWLMTNLMNIAIPPSMNFTGELLIMSSLFNWCPTTIIILGLSMLITASYSLHMFLSTQMGPTLLNNQTEPTHSREHLLMTLHLVPLLMISMKPELVI.

Transmembrane regions (helical) follow at residues 1–21 (PIAG…YGII), 34–54 (LFLP…LTCL), 63–85 (IAYS…TPWG), 89–111 (AMAL…NMTY), 124–146 (GLHN…NIAI), and 169–189 (TIII…HMFL).

Belongs to the complex I subunit 4 family.

Its subcellular location is the mitochondrion membrane. It catalyses the reaction a ubiquinone + NADH + 5 H(+)(in) = a ubiquinol + NAD(+) + 4 H(+)(out). Functionally, core subunit of the mitochondrial membrane respiratory chain NADH dehydrogenase (Complex I) that is believed to belong to the minimal assembly required for catalysis. Complex I functions in the transfer of electrons from NADH to the respiratory chain. The immediate electron acceptor for the enzyme is believed to be ubiquinone. The protein is NADH-ubiquinone oxidoreductase chain 4 (MT-ND4) of Crotalus lepidus (Banded rock rattlesnake).